A 121-amino-acid chain; its full sequence is Iron-sulfur cluster assembly protein CyaY (121 aa).

The protein belongs to the frataxin family.

In terms of biological role, involved in iron-sulfur (Fe-S) cluster assembly. May act as a regulator of Fe-S biogenesis. This Buchnera aphidicola subsp. Schizaphis graminum (strain Sg) protein is Iron-sulfur cluster assembly protein CyaY.